We begin with the raw amino-acid sequence, 167 residues long: SsrA-binding protein (167 aa).

The segment covering 139 to 158 has biased composition (basic and acidic residues); the sequence is QNHDKRDAAKERDWQRDKQR. The interval 139–167 is disordered; that stretch reads QNHDKRDAAKERDWQRDKQRVMRRHNRDA.

Belongs to the SmpB family.

The protein resides in the cytoplasm. Its function is as follows. Required for rescue of stalled ribosomes mediated by trans-translation. Binds to transfer-messenger RNA (tmRNA), required for stable association of tmRNA with ribosomes. tmRNA and SmpB together mimic tRNA shape, replacing the anticodon stem-loop with SmpB. tmRNA is encoded by the ssrA gene; the 2 termini fold to resemble tRNA(Ala) and it encodes a 'tag peptide', a short internal open reading frame. During trans-translation Ala-aminoacylated tmRNA acts like a tRNA, entering the A-site of stalled ribosomes, displacing the stalled mRNA. The ribosome then switches to translate the ORF on the tmRNA; the nascent peptide is terminated with the 'tag peptide' encoded by the tmRNA and targeted for degradation. The ribosome is freed to recommence translation, which seems to be the essential function of trans-translation. This Xanthomonas oryzae pv. oryzae (strain PXO99A) protein is SsrA-binding protein.